We begin with the raw amino-acid sequence, 311 residues long: tRNA dimethylallyltransferase (311 aa).

Position 14 to 21 (14 to 21 (GPTAVGKT)) interacts with ATP. 16 to 21 (TAVGKT) is a substrate binding site. An interaction with substrate tRNA region spans residues 39–42 (DSMQ).

This sequence belongs to the IPP transferase family. As to quaternary structure, monomer. Requires Mg(2+) as cofactor.

The catalysed reaction is adenosine(37) in tRNA + dimethylallyl diphosphate = N(6)-dimethylallyladenosine(37) in tRNA + diphosphate. Its function is as follows. Catalyzes the transfer of a dimethylallyl group onto the adenine at position 37 in tRNAs that read codons beginning with uridine, leading to the formation of N6-(dimethylallyl)adenosine (i(6)A). This is tRNA dimethylallyltransferase from Lactiplantibacillus plantarum (strain ATCC BAA-793 / NCIMB 8826 / WCFS1) (Lactobacillus plantarum).